A 192-amino-acid polypeptide reads, in one-letter code: Signal peptidase complex catalytic subunit SEC11C (192 aa).

Topologically, residues 1 to 28 (MVRAGAVGTHLPTSSLDIFGDLRKMNKR) are cytoplasmic. Residues 29 to 48 (QLYYQVLNFAMIVSSALMIW) form a helical; Signal-anchor for type II membrane protein membrane-spanning segment. The Lumenal portion of the chain corresponds to 49 to 192 (KGLIVLTGSE…GAYVLLKRES (144 aa)). Residues Ser68, His108, and Asp134 each act as charge relay system in the active site. The segment at 177 to 188 (ALVAVMGAYVLL) is C-terminal short (CTS) helix.

Belongs to the peptidase S26B family. In terms of assembly, component of the signal peptidase complex paralog C (SPC-C) composed of a catalytic subunit SEC11C and three accessory subunits SPCS1, SPCS2 and SPCS3. Within the complex, interacts with SPCS2 and SPCS3. The complex induces a local thinning of the ER membrane which is used to measure the length of the signal peptide (SP) h-region of protein substrates. This ensures the selectivity of the complex towards h-regions shorter than 18-20 amino acids. Post-translationally, may undergo processing at the N-terminus.

It is found in the endoplasmic reticulum membrane. It carries out the reaction Cleavage of hydrophobic, N-terminal signal or leader sequences from secreted and periplasmic proteins.. In terms of biological role, catalytic component of the signal peptidase complex (SPC) which catalyzes the cleavage of N-terminal signal sequences from nascent proteins as they are translocated into the lumen of the endoplasmic reticulum. Specifically cleaves N-terminal signal peptides that contain a hydrophobic alpha-helix (h-region) shorter than 18-20 amino acids. In Rattus norvegicus (Rat), this protein is Signal peptidase complex catalytic subunit SEC11C (Sec11c).